Reading from the N-terminus, the 59-residue chain is Photosystem II reaction center protein K (59 aa).

A propeptide spanning residues 1–22 (MILYSHLSTLIDIDLSNNIFLA) is cleaved from the precursor. Residues 30–50 (IFDPLVDVMPVIPVFFLLLAF) traverse the membrane as a helical segment.

Belongs to the PsbK family. As to quaternary structure, PSII is composed of 1 copy each of membrane proteins PsbA, PsbB, PsbC, PsbD, PsbE, PsbF, PsbH, PsbI, PsbJ, PsbK, PsbL, PsbM, PsbT, PsbX, PsbY, PsbZ, Psb30/Ycf12, at least 3 peripheral proteins of the oxygen-evolving complex and a large number of cofactors. It forms dimeric complexes.

It localises to the plastid. The protein resides in the chloroplast thylakoid membrane. Functionally, one of the components of the core complex of photosystem II (PSII). PSII is a light-driven water:plastoquinone oxidoreductase that uses light energy to abstract electrons from H(2)O, generating O(2) and a proton gradient subsequently used for ATP formation. It consists of a core antenna complex that captures photons, and an electron transfer chain that converts photonic excitation into a charge separation. The protein is Photosystem II reaction center protein K of Chara vulgaris (Common stonewort).